Here is a 469-residue protein sequence, read N- to C-terminus: Abscisic acid 8'-hydroxylase CYP707A2 (469 aa).

A helical transmembrane segment spans residues 3–23 (FVSMLCLFTFISLTLLLIHSI). Cys-414 serves as a coordination point for heme.

It belongs to the cytochrome P450 family. The cofactor is heme. Expressed at low levels in fruit.

The protein resides in the membrane. The catalysed reaction is 2-cis-(+)-abscisate + reduced [NADPH--hemoprotein reductase] + O2 = (+)-8'-hydroxyabscisate + oxidized [NADPH--hemoprotein reductase] + H2O + H(+). It participates in plant hormone degradation; abscisic acid degradation. Functionally, negative regulator of fruit ripening involved in the oxidative degradation of abscisic acid (ABA). The sequence is that of Abscisic acid 8'-hydroxylase CYP707A2 from Solanum lycopersicum (Tomato).